An 88-amino-acid chain; its full sequence is Small ribosomal subunit protein uS15 (88 aa).

The protein belongs to the universal ribosomal protein uS15 family. In terms of assembly, part of the 30S ribosomal subunit. Forms a bridge to the 50S subunit in the 70S ribosome, contacting the 23S rRNA.

Its function is as follows. One of the primary rRNA binding proteins, it binds directly to 16S rRNA where it helps nucleate assembly of the platform of the 30S subunit by binding and bridging several RNA helices of the 16S rRNA. Forms an intersubunit bridge (bridge B4) with the 23S rRNA of the 50S subunit in the ribosome. The sequence is that of Small ribosomal subunit protein uS15 from Geotalea daltonii (strain DSM 22248 / JCM 15807 / FRC-32) (Geobacter daltonii).